Here is a 347-residue protein sequence, read N- to C-terminus: Isocitrate dehydrogenase [NAD] subunit alpha, mitochondrial (347 aa).

A mitochondrion-targeting transit peptide spans 1 to 8 (QKQVTRGF). 14 to 42 (TVTLIPGDGIGPEISAAVMKIFDAAKAPI) contributes to the NAD(+) binding site. The residue at position 58 (K58) is an N6-succinyllysine. A Phosphothreonine modification is found at T82. 3 residues coordinate substrate: R96, R106, and R127. Residue K204 is modified to N6-acetyllysine. D214, D238, and D242 together coordinate Mg(2+). The residue at position 324 (K324) is an N6-acetyllysine; alternate. K324 is subject to N6-succinyllysine; alternate. K331 is subject to N6-succinyllysine.

The protein belongs to the isocitrate and isopropylmalate dehydrogenases family. Heterooligomer of subunits alpha (IDH3A), beta (IDH3B), and gamma (IDH3G) in the apparent ratio of 2:1:1. The heterodimer containing one IDH3A and one IDH3B subunit and the heterodimer containing one IDH3A and one IDH3G subunit assemble into a heterotetramer (which contains two subunits of IDH3A, one of IDH3B and one of IDH3G) and further into the heterooctamer. Mg(2+) serves as cofactor. It depends on Mn(2+) as a cofactor.

The protein resides in the mitochondrion. The enzyme catalyses D-threo-isocitrate + NAD(+) = 2-oxoglutarate + CO2 + NADH. Its activity is regulated as follows. The heterotetramer and the heterodimer composed of IDH3A and IDH3G subunits can be allosterically activated by citrate (CIT) or/and ADP, and the two activators can act independently or synergistically. The heterodimer composed of IDH3A and IDH3B subunits cannot be allosterically regulated and the allosteric regulation of the heterotetramer is through the IDH3G subunit and not the IDH3B subunit. The IDH3G subunit contains the allosteric site which consists of a CIT-binding site and an ADP-binding site, and the binding of CIT and ADP causes conformational changes at the allosteric site which are transmitted to the active site in the catalytic subunit (IDH3A) through a cascade of conformational changes at the heterodimer interface, leading to stabilization of the isocitrate-binding at the active site and thus activation of the enzyme. ATP can activate the heterotetramer and the heterodimer composed of IDH3A and IDH3G subunits at low concentrations but inhibits their activities at high concentrations, whereas ATP exhibits only inhibitory effect on the heterodimer composed of IDH3A and IDH3B subunits. In terms of biological role, catalytic subunit of the enzyme which catalyzes the decarboxylation of isocitrate (ICT) into alpha-ketoglutarate. The heterodimer composed of the alpha (IDH3A) and beta (IDH3B) subunits and the heterodimer composed of the alpha (IDH3A) and gamma (IDH3G) subunits, have considerable basal activity but the full activity of the heterotetramer (containing two subunits of IDH3A, one of IDH3B and one of IDH3G) requires the assembly and cooperative function of both heterodimers. This Macaca fascicularis (Crab-eating macaque) protein is Isocitrate dehydrogenase [NAD] subunit alpha, mitochondrial (IDH3A).